Here is a 215-residue protein sequence, read N- to C-terminus: ATP-dependent dethiobiotin synthetase BioD (215 aa).

Residue 13 to 18 coordinates ATP; the sequence is DIGKTV. A Mg(2+)-binding site is contributed by threonine 17. The active site involves lysine 38. Threonine 42 provides a ligand contact to substrate. ATP is bound by residues aspartate 50, 115–118, and 175–176; these read EGAG and NH. The Mg(2+) site is built by aspartate 50 and glutamate 115.

The protein belongs to the dethiobiotin synthetase family. As to quaternary structure, homodimer. The cofactor is Mg(2+).

It localises to the cytoplasm. It catalyses the reaction (7R,8S)-7,8-diammoniononanoate + CO2 + ATP = (4R,5S)-dethiobiotin + ADP + phosphate + 3 H(+). Its pathway is cofactor biosynthesis; biotin biosynthesis; biotin from 7,8-diaminononanoate: step 1/2. Catalyzes a mechanistically unusual reaction, the ATP-dependent insertion of CO2 between the N7 and N8 nitrogen atoms of 7,8-diaminopelargonic acid (DAPA, also called 7,8-diammoniononanoate) to form a ureido ring. The sequence is that of ATP-dependent dethiobiotin synthetase BioD from Neisseria gonorrhoeae (strain NCCP11945).